We begin with the raw amino-acid sequence, 333 residues long: Anthranilate phosphoribosyltransferase (333 aa).

Residues Gly-80, 83–84, Thr-88, 90–93, 108–116, and Ser-120 each bind 5-phospho-alpha-D-ribose 1-diphosphate; these read GD, NLST, and KHGNRSASG. Gly-80 serves as a coordination point for anthranilate. Residue Ser-92 participates in Mg(2+) binding. Asn-111 provides a ligand contact to anthranilate. Arg-166 is an anthranilate binding site. Positions 224 and 225 each coordinate Mg(2+).

The protein belongs to the anthranilate phosphoribosyltransferase family. In terms of assembly, homodimer. It depends on Mg(2+) as a cofactor.

The enzyme catalyses N-(5-phospho-beta-D-ribosyl)anthranilate + diphosphate = 5-phospho-alpha-D-ribose 1-diphosphate + anthranilate. The protein operates within amino-acid biosynthesis; L-tryptophan biosynthesis; L-tryptophan from chorismate: step 2/5. In terms of biological role, catalyzes the transfer of the phosphoribosyl group of 5-phosphorylribose-1-pyrophosphate (PRPP) to anthranilate to yield N-(5'-phosphoribosyl)-anthranilate (PRA). The sequence is that of Anthranilate phosphoribosyltransferase from Pyrobaculum arsenaticum (strain DSM 13514 / JCM 11321 / PZ6).